A 236-amino-acid polypeptide reads, in one-letter code: Ureidoacrylate amidohydrolase RutB (236 aa).

The Proton acceptor role is filled by aspartate 24. Lysine 133 is an active-site residue. Cysteine 166 functions as the Nucleophile in the catalytic mechanism.

Belongs to the isochorismatase family. RutB subfamily.

It carries out the reaction (Z)-3-ureidoacrylate + H2O + H(+) = (Z)-3-aminoacrylate + NH4(+) + CO2. The catalysed reaction is (Z)-3-ureidoacrylate + H2O = (Z)-3-aminoacrylate + carbamate + H(+). The enzyme catalyses (Z)-2-methylureidoacrylate + H2O + H(+) = (Z)-2-methylaminoacrylate + NH4(+) + CO2. In terms of biological role, hydrolyzes ureidoacrylate to form aminoacrylate and carbamate. The carbamate hydrolyzes spontaneously, thereby releasing one of the nitrogen atoms of the pyrimidine ring as ammonia and one of its carbon atoms as CO2. The polypeptide is Ureidoacrylate amidohydrolase RutB (Klebsiella pneumoniae subsp. pneumoniae (strain ATCC 700721 / MGH 78578)).